Consider the following 313-residue polypeptide: Ribosomal RNA small subunit methyltransferase H (313 aa).

Residues 34-36 (GGH), Asp-54, Phe-81, Asp-102, and Gln-109 each bind S-adenosyl-L-methionine. Residues 289–313 (IAGPEETDRNPRARSAKLRAAEKLG) form a disordered region.

It belongs to the methyltransferase superfamily. RsmH family.

It is found in the cytoplasm. The enzyme catalyses cytidine(1402) in 16S rRNA + S-adenosyl-L-methionine = N(4)-methylcytidine(1402) in 16S rRNA + S-adenosyl-L-homocysteine + H(+). Functionally, specifically methylates the N4 position of cytidine in position 1402 (C1402) of 16S rRNA. The polypeptide is Ribosomal RNA small subunit methyltransferase H (Trichlorobacter lovleyi (strain ATCC BAA-1151 / DSM 17278 / SZ) (Geobacter lovleyi)).